Reading from the N-terminus, the 1584-residue chain is Pentafunctional AROM polypeptide (1584 aa).

The 3-dehydroquinate synthase stretch occupies residues 1–384; it reads MSQDTDVVSV…YEKHATVVSD (384 aa). Residues 46 to 48, 83 to 86, 114 to 116, and D119 contribute to the NAD(+) site; these read DTN, ETSK, and GGV. R130 contributes to the 7-phospho-2-dehydro-3-deoxy-D-arabino-heptonate binding site. 139–140 contributes to the NAD(+) binding site; it reads TT. 7-phospho-2-dehydro-3-deoxy-D-arabino-heptonate is bound by residues D146 and K152. K161 is an NAD(+) binding site. N162 is a binding site for 7-phospho-2-dehydro-3-deoxy-D-arabino-heptonate. NAD(+) contacts are provided by residues 179–182 and N190; that span reads FLET. A Zn(2+)-binding site is contributed by E194. 7-phospho-2-dehydro-3-deoxy-D-arabino-heptonate contacts are provided by residues 194-197 and K250; that span reads EVIK. The active-site Proton acceptor; for 3-dehydroquinate synthase activity is the E260. 7-phospho-2-dehydro-3-deoxy-D-arabino-heptonate contacts are provided by residues 264–268 and H271; that span reads RNLLN. H271 lines the Zn(2+) pocket. Catalysis depends on H275, which acts as the Proton acceptor; for 3-dehydroquinate synthase activity. 7-phospho-2-dehydro-3-deoxy-D-arabino-heptonate-binding residues include H287 and K356. H287 is a binding site for Zn(2+). Residues 397–843 are EPSP synthase; it reads VSPFDNSVSD…WDVLRNSFKI (447 aa). C825 serves as the catalytic For EPSP synthase activity. Positions 863-1058 are shikimate kinase; that stretch reads RASVILIGMR…IQKPHSFFLS (196 aa). 870-877 is a binding site for ATP; it reads GMRGAGKT. Residues 1059–1280 form a 3-dehydroquinase region; that stretch reads LTFPNINDAI…AAPGQLSVRQ (222 aa). The active-site Proton acceptor; for 3-dehydroquinate dehydratase activity is the H1182. K1211 acts as the Schiff-base intermediate with substrate; for 3-dehydroquinate dehydratase activity in catalysis. The shikimate dehydrogenase stretch occupies residues 1293–1584; that stretch reads PKKFYLFGTP…YMVLCAKEHN (292 aa).

The protein in the N-terminal section; belongs to the sugar phosphate cyclases superfamily. Dehydroquinate synthase family. In the 2nd section; belongs to the EPSP synthase family. It in the 3rd section; belongs to the shikimate kinase family. This sequence in the 4th section; belongs to the type-I 3-dehydroquinase family. The protein in the C-terminal section; belongs to the shikimate dehydrogenase family. As to quaternary structure, homodimer. It depends on Zn(2+) as a cofactor.

The protein resides in the cytoplasm. The catalysed reaction is 7-phospho-2-dehydro-3-deoxy-D-arabino-heptonate = 3-dehydroquinate + phosphate. It catalyses the reaction 3-dehydroquinate = 3-dehydroshikimate + H2O. It carries out the reaction shikimate + NADP(+) = 3-dehydroshikimate + NADPH + H(+). The enzyme catalyses shikimate + ATP = 3-phosphoshikimate + ADP + H(+). The catalysed reaction is 3-phosphoshikimate + phosphoenolpyruvate = 5-O-(1-carboxyvinyl)-3-phosphoshikimate + phosphate. It functions in the pathway metabolic intermediate biosynthesis; chorismate biosynthesis; chorismate from D-erythrose 4-phosphate and phosphoenolpyruvate: step 2/7. The protein operates within metabolic intermediate biosynthesis; chorismate biosynthesis; chorismate from D-erythrose 4-phosphate and phosphoenolpyruvate: step 3/7. It participates in metabolic intermediate biosynthesis; chorismate biosynthesis; chorismate from D-erythrose 4-phosphate and phosphoenolpyruvate: step 4/7. Its pathway is metabolic intermediate biosynthesis; chorismate biosynthesis; chorismate from D-erythrose 4-phosphate and phosphoenolpyruvate: step 5/7. It functions in the pathway metabolic intermediate biosynthesis; chorismate biosynthesis; chorismate from D-erythrose 4-phosphate and phosphoenolpyruvate: step 6/7. In terms of biological role, the AROM polypeptide catalyzes 5 consecutive enzymatic reactions in prechorismate polyaromatic amino acid biosynthesis. This chain is Pentafunctional AROM polypeptide, found in Schizosaccharomyces japonicus (strain yFS275 / FY16936) (Fission yeast).